The primary structure comprises 196 residues: Probable cobalt-precorrin-6B C(15)-methyltransferase (decarboxylating) (196 aa).

S-adenosyl-L-methionine contacts are provided by residues threonine 24, 48-52, aspartate 72, and alanine 101; that span reads GCGTG.

This sequence belongs to the methyltransferase superfamily. Archaeal-type CbiT family.

It catalyses the reaction Co-precorrin-6B + S-adenosyl-L-methionine = Co-precorrin-7 + S-adenosyl-L-homocysteine + CO2. It participates in cofactor biosynthesis; adenosylcobalamin biosynthesis; cob(II)yrinate a,c-diamide from sirohydrochlorin (anaerobic route): step 8/10. Functionally, catalyzes the methylation of C-15 in cobalt-precorrin-6B followed by the decarboxylation of C-12 to form cobalt-precorrin-7. This is Probable cobalt-precorrin-6B C(15)-methyltransferase (decarboxylating) from Pyrobaculum aerophilum (strain ATCC 51768 / DSM 7523 / JCM 9630 / CIP 104966 / NBRC 100827 / IM2).